The following is a 168-amino-acid chain: Small ribosomal subunit protein uS5 (168 aa).

An S5 DRBM domain is found at 13–76 (LQEKLIAVNR…EKARRNMVTV (64 aa)).

This sequence belongs to the universal ribosomal protein uS5 family. In terms of assembly, part of the 30S ribosomal subunit. Contacts proteins S4 and S8.

In terms of biological role, with S4 and S12 plays an important role in translational accuracy. Located at the back of the 30S subunit body where it stabilizes the conformation of the head with respect to the body. The polypeptide is Small ribosomal subunit protein uS5 (Shewanella amazonensis (strain ATCC BAA-1098 / SB2B)).